The primary structure comprises 78 residues: Acyl carrier protein (78 aa).

Residues 2–77 (SSIEERVKKI…LAIDYINANL (76 aa)) enclose the Carrier domain. Ser-37 is modified (O-(pantetheine 4'-phosphoryl)serine).

This sequence belongs to the acyl carrier protein (ACP) family. 4'-phosphopantetheine is transferred from CoA to a specific serine of apo-ACP by AcpS. This modification is essential for activity because fatty acids are bound in thioester linkage to the sulfhydryl of the prosthetic group.

Its subcellular location is the cytoplasm. Its pathway is lipid metabolism; fatty acid biosynthesis. Carrier of the growing fatty acid chain in fatty acid biosynthesis. This Cellvibrio japonicus (strain Ueda107) (Pseudomonas fluorescens subsp. cellulosa) protein is Acyl carrier protein.